The following is a 104-amino-acid chain: uncharacterized protein (104 aa).

It is found in the mitochondrion. This is an uncharacterized protein from Claviceps purpurea (Ergot fungus).